The following is a 314-amino-acid chain: Oxidoreductase NAD-binding domain-containing protein 1 (314 aa).

The signal sequence occupies residues 1–18 (MALVAGSAAYQVLRGVTG). In terms of domain architecture, FAD-binding FR-type spans 63–166 (EIISPAKVCE…VGGEFCFDPQ (104 aa)). An NAD(+)-binding site is contributed by 180–185 (GVGINP).

The protein is Oxidoreductase NAD-binding domain-containing protein 1 (oxnad1) of Xenopus tropicalis (Western clawed frog).